We begin with the raw amino-acid sequence, 541 residues long: CTP synthase (541 aa).

The tract at residues 1 to 268 is amidoligase domain; the sequence is MAKFIFITGG…AEIVCRRLGL (268 aa). Ser-13 is a binding site for CTP. Ser-13 lines the UTP pocket. ATP is bound by residues 14–19 and Asp-71; that span reads GLGKGI. Mg(2+)-binding residues include Asp-71 and Glu-141. Residues 148–150, 189–194, and Lys-225 each bind CTP; these read DIE and KTKPTQ. UTP contacts are provided by residues 189–194 and Lys-225; that span reads KTKPTQ. In terms of domain architecture, Glutamine amidotransferase type-1 spans 293 to 539; it reads EIALVGKYVA…IKAALEYRAG (247 aa). Gly-359 contributes to the L-glutamine binding site. The active-site Nucleophile; for glutamine hydrolysis is the Cys-386. L-glutamine is bound by residues 387–390, Glu-410, and Arg-467; that span reads MGMQ. Active-site residues include His-512 and Glu-514.

This sequence belongs to the CTP synthase family. Homotetramer.

It carries out the reaction UTP + L-glutamine + ATP + H2O = CTP + L-glutamate + ADP + phosphate + 2 H(+). It catalyses the reaction L-glutamine + H2O = L-glutamate + NH4(+). The enzyme catalyses UTP + NH4(+) + ATP = CTP + ADP + phosphate + 2 H(+). It participates in pyrimidine metabolism; CTP biosynthesis via de novo pathway; CTP from UDP: step 2/2. Its activity is regulated as follows. Allosterically activated by GTP, when glutamine is the substrate; GTP has no effect on the reaction when ammonia is the substrate. The allosteric effector GTP functions by stabilizing the protein conformation that binds the tetrahedral intermediate(s) formed during glutamine hydrolysis. Inhibited by the product CTP, via allosteric rather than competitive inhibition. Functionally, catalyzes the ATP-dependent amination of UTP to CTP with either L-glutamine or ammonia as the source of nitrogen. Regulates intracellular CTP levels through interactions with the four ribonucleotide triphosphates. The chain is CTP synthase from Symbiobacterium thermophilum (strain DSM 24528 / JCM 14929 / IAM 14863 / T).